A 333-amino-acid polypeptide reads, in one-letter code: Adenosine deaminase (333 aa).

Zn(2+) is bound by residues His-12 and His-14. Substrate is bound by residues His-14, Asp-16, and Gly-170. His-197 is a binding site for Zn(2+). Residue Glu-200 is the Proton donor of the active site. Asp-278 is a Zn(2+) binding site. Asp-279 provides a ligand contact to substrate.

It belongs to the metallo-dependent hydrolases superfamily. Adenosine and AMP deaminases family. Adenosine deaminase subfamily. Requires Zn(2+) as cofactor.

The catalysed reaction is adenosine + H2O + H(+) = inosine + NH4(+). It carries out the reaction 2'-deoxyadenosine + H2O + H(+) = 2'-deoxyinosine + NH4(+). In terms of biological role, catalyzes the hydrolytic deamination of adenosine and 2-deoxyadenosine. The sequence is that of Adenosine deaminase from Pseudoalteromonas translucida (strain TAC 125).